Here is a 683-residue protein sequence, read N- to C-terminus: Glycine--tRNA ligase beta subunit (683 aa).

The protein belongs to the class-II aminoacyl-tRNA synthetase family. In terms of assembly, tetramer of two alpha and two beta subunits.

The protein resides in the cytoplasm. It carries out the reaction tRNA(Gly) + glycine + ATP = glycyl-tRNA(Gly) + AMP + diphosphate. In Pseudomonas putida (strain W619), this protein is Glycine--tRNA ligase beta subunit.